The sequence spans 743 residues: Dolichyl-phosphooligosaccharide-protein glycotransferase 2 (743 aa).

Topologically, residues 1–7 (MKIDKRL) are cytoplasmic. The helical transmembrane segment at 8-28 (MVIVAIATLFRMIPFRLKYLV) threads the bilayer. Residues 29–31 (GSD) carry the DXD motif 1 motif. Residues 29-91 (GSDPYFHLAY…FSFLGISLYT (63 aa)) are Extracellular-facing. Mn(2+) is bound at residue Asp31. The helical transmembrane segment at 92–112 (AFRVTPVIFGVLTVVFFYLSL) threads the bilayer. The Cytoplasmic segment spans residues 113-119 (KKLYNRD). The helical transmembrane segment at 120–140 (VAFIVGLFLGVNYGHIFRSMA) threads the bilayer. The Extracellular segment spans residues 141-144 (NYYR). Arg144 and Asp146 together coordinate Mn(2+). The short motif at 144–146 (RGD) is the DXD motif 2 element. A helical transmembrane segment spans residues 145-165 (GDNYMLFWYSVALLGIALGLK). The Cytoplasmic portion of the chain corresponds to 166–170 (TRSKY). 2 helical membrane-spanning segments follow: residues 171–191 (RYLFYLLPGIATGFASAFWQA) and 192–212 (YYPIFVFVLAGGLLLGVYAYL). Residues 213 to 216 (KSPK) lie on the Cytoplasmic side of the membrane. Residues 217–237 (LFLDSILIVLSTGLGVLIANI) form a helical membrane-spanning segment. Residues 238 to 272 (LGDKVGYGMLGYTDWMGKKVAETFGLEFGFIKDAY) are Extracellular-facing. Residues 273-293 (LLIHVKYLLPLSLVFLGFLII) traverse the membrane as a helical segment. Topologically, residues 294 to 302 (TKKLNPKIK) are cytoplasmic. A helical membrane pass occupies residues 303–323 (VGVLVGGSILAFIVMLVKFPA). Residues 324 to 345 (LKDLSTGFGTFREVPISETLPP) lie on the Extracellular side of the membrane. The TIXE motif motif lies at 333 to 336 (TFRE). Residues 346–366 (TLDDLWRAYNIAIFLAALYIL) form a helical membrane-spanning segment. At 367–373 (RLRKIRS) the chain is on the cytoplasmic side. Residues 374-391 (GDAILLGYVITSLWMLRY) form a helical membrane-spanning segment. Residues 392–394 (WTR) are Extracellular-facing. Residue Arg394 participates in a glycophospholipid binding. A helical transmembrane segment spans residues 395-415 (FLFTAAPAVAFLSGIGVYELT). Over 416–424 (RRIKENKIR) the chain is Cytoplasmic. A helical transmembrane segment spans residues 425–445 (ITSLGVVILLSSAFSLGEVYS). Topologically, residues 446 to 743 (VKPFMNENWE…LDRGIVRVKN (298 aa)) are extracellular. The tract at residues 474-476 (WWD) is interacts with target acceptor peptide in protein substrate. The short motif at 474-478 (WWDWG) is the WWDYG motif element. Positions 526–533 (DILKFEAI) match the DK motif motif.

The protein belongs to the STT3 family. Mn(2+) is required as a cofactor. The cofactor is Mg(2+).

The protein localises to the cell membrane. The catalysed reaction is an archaeal dolichyl phosphooligosaccharide + [protein]-L-asparagine = an archaeal dolichyl phosphate + a glycoprotein with the oligosaccharide chain attached by N-beta-D-glycosyl linkage to a protein L-asparagine.. The protein operates within protein modification; protein glycosylation. Functionally, oligosaccharyl transferase (OST) that catalyzes the initial transfer of a defined glycan (ManNAcXyl(2)GlcAMan(2)GalNAc in P.furiosus) from the lipid carrier dolichol-monophosphate to an asparagine residue within an Asn-X-Ser/Thr consensus motif in nascent polypeptide chains, the first step in protein N-glycosylation. The protein is Dolichyl-phosphooligosaccharide-protein glycotransferase 2 (aglB2) of Pyrococcus furiosus (strain ATCC 43587 / DSM 3638 / JCM 8422 / Vc1).